The chain runs to 390 residues: GTPase Obg (390 aa).

An Obg domain is found at 1-159 (MKFVDEASIL…RDLLLELMLL (159 aa)). The segment at 127–147 (NTRFKSSVNRTPRQKTNGTPG) is disordered. Over residues 129–145 (RFKSSVNRTPRQKTNGT) the composition is skewed to polar residues. The OBG-type G domain maps to 160–333 (ADVGMLGMPN…LCWDVMTFII (174 aa)). GTP contacts are provided by residues 166 to 173 (GMPNAGKS), 191 to 195 (FTTLV), 213 to 216 (DIPG), 283 to 286 (NKID), and 314 to 316 (SAA). Mg(2+) contacts are provided by serine 173 and threonine 193.

Belongs to the TRAFAC class OBG-HflX-like GTPase superfamily. OBG GTPase family. Monomer. The cofactor is Mg(2+).

Its subcellular location is the cytoplasm. Its function is as follows. An essential GTPase which binds GTP, GDP and possibly (p)ppGpp with moderate affinity, with high nucleotide exchange rates and a fairly low GTP hydrolysis rate. Plays a role in control of the cell cycle, stress response, ribosome biogenesis and in those bacteria that undergo differentiation, in morphogenesis control. The sequence is that of GTPase Obg from Salmonella gallinarum (strain 287/91 / NCTC 13346).